The primary structure comprises 335 residues: tRNA N6-adenosine threonylcarbamoyltransferase (335 aa).

Residues His-109, His-113, and Tyr-130 each contribute to the a divalent metal cation site. Residues 130-134, Asp-162, Gly-177, Glu-181, and Asn-266 contribute to the substrate site; that span reads YVSGG. Asp-294 serves as a coordination point for a divalent metal cation.

Belongs to the KAE1 / TsaD family. As to quaternary structure, component of the EKC/KEOPS complex composed of at least tp53rk, tprkb, osgep and lage3; the whole complex dimerizes. It depends on a divalent metal cation as a cofactor.

Its subcellular location is the cytoplasm. It localises to the nucleus. The enzyme catalyses L-threonylcarbamoyladenylate + adenosine(37) in tRNA = N(6)-L-threonylcarbamoyladenosine(37) in tRNA + AMP + H(+). In terms of biological role, component of the EKC/KEOPS complex that is required for the formation of a threonylcarbamoyl group on adenosine at position 37 (t(6)A37) in tRNAs that read codons beginning with adenine. The complex is probably involved in the transfer of the threonylcarbamoyl moiety of threonylcarbamoyl-AMP (TC-AMP) to the N6 group of A37. Osgep likely plays a direct catalytic role in this reaction, but requires other protein(s) of the complex to fulfill this activity. The protein is tRNA N6-adenosine threonylcarbamoyltransferase of Xenopus laevis (African clawed frog).